We begin with the raw amino-acid sequence, 103 residues long: Small ribosomal subunit protein uS14c (103 aa).

This sequence belongs to the universal ribosomal protein uS14 family. In terms of assembly, part of the 30S ribosomal subunit.

It localises to the plastid. Its subcellular location is the chloroplast. Binds 16S rRNA, required for the assembly of 30S particles. In Oryza nivara (Indian wild rice), this protein is Small ribosomal subunit protein uS14c.